We begin with the raw amino-acid sequence, 108 residues long: MPRAAKSSRKKDPNTPKRNMSAFMFFSIENREKMKTDNPDATFGQLGSLLGKRWKELTSTEREPYEEKARQDKERYERERKEYDTKLANGEKTGKASAPAAAAAAKEE.

2 disordered regions span residues 1-20 and 61-108; these read MPRAAKSSRKKDPNTPKRNM and EREP…AKEE. The segment at residues 16–84 is a DNA-binding region (HMG box); it reads PKRNMSAFMF…RYERERKEYD (69 aa). The span at 61–85 shows a compositional bias: basic and acidic residues; it reads EREPYEEKARQDKERYERERKEYDT. A compositionally biased stretch (low complexity) spans 96 to 108; the sequence is ASAPAAAAAAKEE.

This sequence belongs to the NHP6 family. As to quaternary structure, weakly associates with the stable spt16-pob3 heterodimer to form the FACT complex.

The protein resides in the nucleus. The protein localises to the chromosome. In terms of biological role, DNA-binding protein that induces severe bending of DNA. Required for DNA-binding by the FACT complex, a general chromatin factor that acts to reorganize nucleosomes. The FACT complex is involved in multiple processes that require DNA as a template such as mRNA elongation, DNA replication and DNA repair. Also augments the fidelity of transcription by RNA polymerase III independently of any role in the FACT complex. This Schizosaccharomyces pombe (strain 972 / ATCC 24843) (Fission yeast) protein is Non-histone chromosomal protein 6 (nhp6).